Here is a 103-residue protein sequence, read N- to C-terminus: uncharacterized protein (103 aa).

The signal sequence occupies residues 1 to 13 (MLLSSIVSFVADA). N-linked (GlcNAc...) asparagine glycosylation is present at Asn-67. Positions 73–103 (LSSDSNRNIIDNSNNNQHPSSSSTSTSWKKF) are disordered.

The protein resides in the secreted. This is an uncharacterized protein from Dictyostelium discoideum (Social amoeba).